Reading from the N-terminus, the 317-residue chain is MSTLLERTKSVQELKKRAAGKTSANPAEVAKAKKVLRRLYSWDEIPEWQRDNDFILHGYVKETSSFIETFKSLFYLHNESVNIYSHLIPALGFFTVLLLDKSTIKVFATTTWLDHMVIDLFYSGAFACLILSSSFHCLKSHSLRIATLGNKLDYLGICILIVTSMVSILYYGYFEKFSLFCLFALITVSFGIACSIVSLKDKFRKREWRPYRAGLFVCFGLSSIIPIFSGLYCYSFSEIWTQIQLFWVLLGGVLYIIGAVLYGMRFPEKICPGKFDIWGHSHQLFHFLVVIAALCHLRGLLNSYELVHIKMENGIVS.

At 1–78 (MSTLLERTKS…TFKSLFYLHN (78 aa)) the chain is on the cytoplasmic side. Residues 79-99 (ESVNIYSHLIPALGFFTVLLL) form a helical membrane-spanning segment. Topologically, residues 100 to 110 (DKSTIKVFATT) are extracellular. Residues 111–131 (TWLDHMVIDLFYSGAFACLIL) form a helical membrane-spanning segment. Residues 132 to 153 (SSSFHCLKSHSLRIATLGNKLD) are Cytoplasmic-facing. A helical membrane pass occupies residues 154-174 (YLGICILIVTSMVSILYYGYF). The Extracellular portion of the chain corresponds to 175–176 (EK). The chain crosses the membrane as a helical span at residues 177 to 197 (FSLFCLFALITVSFGIACSIV). The Cytoplasmic portion of the chain corresponds to 198–212 (SLKDKFRKREWRPYR). The chain crosses the membrane as a helical span at residues 213–233 (AGLFVCFGLSSIIPIFSGLYC). Residues 234–242 (YSFSEIWTQ) lie on the Extracellular side of the membrane. Residues 243–263 (IQLFWVLLGGVLYIIGAVLYG) form a helical membrane-spanning segment. The Cytoplasmic segment spans residues 264–276 (MRFPEKICPGKFD). Residues 277–297 (IWGHSHQLFHFLVVIAALCHL) traverse the membrane as a helical segment. At 298-317 (RGLLNSYELVHIKMENGIVS) the chain is on the extracellular side.

Belongs to the ADIPOR family.

It is found in the membrane. In terms of biological role, probable receptor, which is involved in metabolic pathways that regulate lipid metabolism such as fatty acid oxidation. The protein is ADIPOR-like receptor IZH2 (IZH2) of Saccharomyces cerevisiae (strain ATCC 204508 / S288c) (Baker's yeast).